The sequence spans 1088 residues: RNA-directed RNA polymerase (1088 aa).

A RdRp catalytic domain is found at 501-687; it reads LSYGDVTRFL…AKRYIAGGKI (187 aa).

This sequence belongs to the reoviridae RNA-directed RNA polymerase family. Interacts with VP3 (Potential). Interacts with VP2; this interaction activates VP1. Interacts with NSP5; this interaction is probably necessary for the formation of functional virus factories. Interacts with NSP2; this interaction is weak. Mg(2+) serves as cofactor.

Its subcellular location is the virion. The catalysed reaction is RNA(n) + a ribonucleoside 5'-triphosphate = RNA(n+1) + diphosphate. RNA-directed RNA polymerase that is involved in both transcription and genome replication. Together with VP3 capping enzyme, forms an enzyme complex positioned near the channels situated at each of the five-fold vertices of the core. Following infection, the outermost layer of the virus is lost, leaving a double-layered particle (DLP) made up of the core and VP6 shell. VP1 then catalyzes the transcription of fully conservative plus-strand genomic RNAs that are extruded through the DLP's channels into the cytoplasm where they function as mRNAs for translation of viral proteins. One copy of each of the viral (+)RNAs is also recruited during core assembly, together with newly synthesized polymerase complexes and VP2. The polymerase of these novo-formed particles catalyzes the synthesis of complementary minus-strands leading to dsRNA formation. To do so, the polymerase specifically recognizes and binds 4 bases 5'-UGUG-3' in the conserved 3'-sequence of plus-strand RNA templates. VP2 presumably activates the autoinhibited VP1-RNA complex to coordinate packaging and genome replication. Once dsRNA synthesis is complete, the polymerase switches to the transcriptional mode, thus providing secondary transcription. This is RNA-directed RNA polymerase from Homo sapiens (Human).